The following is a 158-amino-acid chain: uncharacterized protein (158 aa).

2 helical membrane passes run 10-30 and 40-60; these read LFFI…LNHF and YITF…NFFL.

Its subcellular location is the membrane. This is an uncharacterized protein from Schizosaccharomyces pombe (strain 972 / ATCC 24843) (Fission yeast).